The chain runs to 662 residues: Polyunsaturated fatty acid (12S)/(13S)-lipoxygenase, epidermal-type (662 aa).

The region spanning 2 to 114 is the PLAT domain; that stretch reads GKYKILVVTG…TIYLPEGTAL (113 aa). Positions 114–662 constitute a Lipoxygenase domain; the sequence is LKVNDDTKNL…PSMVENSVTI (549 aa). The Fe cation site is built by histidine 360, histidine 365, histidine 540, histidine 544, and isoleucine 662.

This sequence belongs to the lipoxygenase family. Fe cation is required as a cofactor.

The protein resides in the cytoplasm. It carries out the reaction (5Z,8Z,11Z,14Z)-eicosatetraenoate + O2 = (12S)-hydroperoxy-(5Z,8Z,10E,14Z)-eicosatetraenoate. The enzyme catalyses 1-O-methyl-(9Z,12Z)-octadecadienoate + O2 = 1-O-methyl-(13S)-hydroperoxy-(9Z,11E)-octadecadienoate. The catalysed reaction is (8Z,11Z,14Z)-eicosatrienoate + O2 = (12S)-hydroperoxy-(8Z,10E,14Z)-eicosatrienoate. It catalyses the reaction (5Z,8Z,11Z)-eicosatrienoate + O2 = (12S)-hydroperoxy-(5Z,8Z,10E)-eicosatrienoate. It carries out the reaction 1-O-methyl-(5Z,8Z,11Z,14Z)-eicosatetraenoate + O2 = 1-O-methyl-(12S)-hydroperoxy-(5Z,8Z,10E,14Z)-eicosatetraenoate. The enzyme catalyses (9Z,12Z)-octadecadienoate + O2 = (13S)-hydroperoxy-(9Z,11E)-octadecadienoate. The catalysed reaction is (4Z,7Z,10Z,13Z,16Z,19Z)-docosahexaenoate + O2 = (14S)-hydroperoxy-(4Z,7Z,10Z,12E,16Z,19Z)-docosahexaenoate. The protein operates within lipid metabolism; hydroperoxy eicosatetraenoic acid biosynthesis. With respect to regulation, arachidonate 12-lipoxygenase activity is decreased when the pH decreases from 7.4 to 6.0. In terms of biological role, catalyzes the regio and stereo-specific incorporation of a single molecule of dioxygen into free and esterified polyunsaturated fatty acids generating lipid hydroperoxides that can be further reduced to the corresponding hydroxy species. Shows increasing catalytic activity within the series arachidonic acid &lt; 5,8,11-eicosatrienoic acid &lt; linoleic acid &lt; 8,11,14-eicosatrienoic acid. The chain is Polyunsaturated fatty acid (12S)/(13S)-lipoxygenase, epidermal-type from Rattus norvegicus (Rat).